A 111-amino-acid chain; its full sequence is DNA-binding protein MTH_1615 (111 aa).

It belongs to the PDCD5 family.

In terms of biological role, DNA-binding protein which can interact with a randomly chosen 20-mer of double-stranded DNA. In Methanothermobacter thermautotrophicus (strain ATCC 29096 / DSM 1053 / JCM 10044 / NBRC 100330 / Delta H) (Methanobacterium thermoautotrophicum), this protein is DNA-binding protein MTH_1615.